The chain runs to 483 residues: Glutamyl-tRNA(Gln) amidotransferase subunit A (483 aa).

Catalysis depends on charge relay system residues Lys75 and Ser150. Residue Ser174 is the Acyl-ester intermediate of the active site.

The protein belongs to the amidase family. GatA subfamily. As to quaternary structure, heterotrimer of A, B and C subunits.

The enzyme catalyses L-glutamyl-tRNA(Gln) + L-glutamine + ATP + H2O = L-glutaminyl-tRNA(Gln) + L-glutamate + ADP + phosphate + H(+). In terms of biological role, allows the formation of correctly charged Gln-tRNA(Gln) through the transamidation of misacylated Glu-tRNA(Gln) in organisms which lack glutaminyl-tRNA synthetase. The reaction takes place in the presence of glutamine and ATP through an activated gamma-phospho-Glu-tRNA(Gln). The protein is Glutamyl-tRNA(Gln) amidotransferase subunit A of Gloeothece citriformis (strain PCC 7424) (Cyanothece sp. (strain PCC 7424)).